Consider the following 858-residue polypeptide: Zinc finger protein ZXDC (858 aa).

Disordered stretches follow at residues 1 to 127 (MDLP…APAG) and 151 to 174 (PGPA…STPG). Composition is skewed to low complexity over residues 23–35 (PLRR…GASP), 84–97 (GGAA…QEAE), and 151–171 (PGPA…SGPS). Serine 34 carries the post-translational modification Phosphoserine. Position 172 is a phosphothreonine (threonine 172). 10 C2H2-type zinc fingers span residues 175–199 (YRCP…LLTH), 208–232 (FKCP…LQSH), 238–262 (FGCP…MKGH), 268–290 (FKCE…QRSH), 297–321 (YKCD…NRAH), 328–352 (FSCS…LRSH), 358–382 (FICD…RRKH), 388–412 (FTCP…SITH), 418–442 (FECP…SKKH), and 451–476 (SRCP…VRQH). Residues 579–688 (DSPLVLGTAA…HGLPQSTLPS (110 aa)) are required for transcriptional activation. Residue lysine 660 forms a Glycyl lysine isopeptide (Lys-Gly) (interchain with G-Cter in SUMO) linkage. Disordered regions lie at residues 660-696 (KVEP…HGAQ), 726-756 (KEKK…SPPH), and 837-858 (GGPA…QDLQ). A Phosphoserine modification is found at serine 665. Over residues 675–687 (QEGSHGLPQSTLP) the composition is skewed to polar residues. The tract at residues 781–858 (PAAGVQCGAQ…GSTINLQDLQ (78 aa)) is interaction with CIITA. Positions 847-858 (FPGSTINLQDLQ) are enriched in polar residues.

This sequence belongs to the ZXD family. As to quaternary structure, self-associates. Interacts with ZXDA and CIITA. Sumoylated at Lys-660 with SUMO1, SUMO2 and SUMO3; sumoylation enhances the activity of the transcriptional activation domain. As to expression, expressed at high levels in heart, kidney, liver and testis, at moderate levels in brain and stomach, and at low levels in lung, muscle, placenta, small intestine and spleen.

It is found in the nucleus. Functionally, cooperates with CIITA to promote transcription of MHC class I and MHC class II genes. The sequence is that of Zinc finger protein ZXDC (ZXDC) from Homo sapiens (Human).